A 294-amino-acid polypeptide reads, in one-letter code: MRISLNKYKIFSNAKINIGLNVFQKESDGYHNIDSIMAPIDLSDEMDVTFYSDLGDLKIECSDKSIPTDERNILYKTYKIFFEESKKEKEKIDIILKKNIPSEAGLGGGSSNAGFFLKLLNKHYGNVYNEKELEKLAMRVGSDVPFFIKNKTARVGGKGNRVDLVENNLKDSIILIKPLDFGVSTKEAYESFDNLKEVKYADFDKIIKNLKEGNRIALESNIENSLEQGILETDTNIKMLKMTLNSVVSGKKFFMSGSGSTYYTFVTELEKSQIETRLKTFVDNVKIIICKTIN.

Lys-15 is a catalytic residue. 101 to 111 (PSEAGLGGGSS) is an ATP binding site. The active site involves Asp-143.

It belongs to the GHMP kinase family. IspE subfamily.

It carries out the reaction 4-CDP-2-C-methyl-D-erythritol + ATP = 4-CDP-2-C-methyl-D-erythritol 2-phosphate + ADP + H(+). Its pathway is isoprenoid biosynthesis; isopentenyl diphosphate biosynthesis via DXP pathway; isopentenyl diphosphate from 1-deoxy-D-xylulose 5-phosphate: step 3/6. In terms of biological role, catalyzes the phosphorylation of the position 2 hydroxy group of 4-diphosphocytidyl-2C-methyl-D-erythritol. This is 4-diphosphocytidyl-2-C-methyl-D-erythritol kinase from Fusobacterium nucleatum subsp. nucleatum (strain ATCC 25586 / DSM 15643 / BCRC 10681 / CIP 101130 / JCM 8532 / KCTC 2640 / LMG 13131 / VPI 4355).